The sequence spans 436 residues: 5-hydroxytryptamine receptor 6 (436 aa).

At 1 to 27 (MVPEPGPVNSSTPAWGPGPPPAPGGSG) the chain is on the extracellular side. N-linked (GlcNAc...) asparagine glycosylation is present at Asn9. Residues 28–52 (WVAAALCVVIVLTAAANSLLIVLIC) traverse the membrane as a helical segment. Residues 53-62 (TQPALRNTSN) are Cytoplasmic-facing. A helical membrane pass occupies residues 63–88 (FFLVSLFTSDLMVGLVVMPPAMLNAL). At 89–96 (YGRWVLAR) the chain is on the extracellular side. A helical transmembrane segment spans residues 97 to 122 (GLCLLWTAFDVMCCSASILNLCLISL). Residues Cys99 and Cys180 are joined by a disulfide bond. Residue Asp106 coordinates serotonin. Residues 123 to 142 (DRYLLILSPLRYKLRMTAPR) lie on the Cytoplasmic side of the membrane. Residues 143 to 167 (ALALILGAWSLAALASFLPLLLGWH) traverse the membrane as a helical segment. Topologically, residues 168 to 185 (ELGKARTPAPGQCRLLAS) are extracellular. The helical transmembrane segment at 186 to 209 (LPFVLVASGVTFFLPSGAICFTYC) threads the bilayer. Topologically, residues 210 to 266 (RILLAARKQAVQVASLTTGTAGQALETLQVPRTPRPGMESADSRRLATKHSRKALKA) are cytoplasmic. A helical transmembrane segment spans residues 267–293 (SLTLGILLGMFFVTWLPFFVANIAQAV). Asn288 provides a ligand contact to serotonin. The Extracellular segment spans residues 294-299 (CDCISP). The helical transmembrane segment at 300–323 (GLFDVLTWLGYCNSTMNPIIYPLF) threads the bilayer. The Cytoplasmic portion of the chain corresponds to 324 to 436 (MRDFKRALGR…RYGRIHSVPP (113 aa)).

Belongs to the G-protein coupled receptor 1 family. Interacts with MTOR, RPTOR and NF1. Interacts with CDK5. Localized exclusively in the central nervous system, predominantly in the corpus striatum but also in various limbic and cortical regions.

It localises to the cell membrane. Functionally, G-protein coupled receptor for 5-hydroxytryptamine (serotonin), a biogenic hormone that functions as a neurotransmitter, a hormone and a mitogen. Also has a high affinity for tricyclic psychotropic drugs. Ligand binding causes a conformation change that triggers signaling via guanine nucleotide-binding proteins (G proteins) and modulates the activity of downstream effectors. HTR6 is coupled to G(s) G alpha proteins and mediates activation of adenylate cyclase activity. Controls pyramidal neurons migration during corticogenesis, through the regulation of CDK5 activity. Is an activator of mTOR signaling. This is 5-hydroxytryptamine receptor 6 (Htr6) from Rattus norvegicus (Rat).